Here is a 990-residue protein sequence, read N- to C-terminus: Presequence protease, mitochondrial (990 aa).

A mitochondrion-targeting transit peptide spans methionine 1–threonine 25. Histidine 89 provides a ligand contact to Zn(2+). Glutamate 92 serves as the catalytic Proton acceptor. Residue histidine 93 participates in Zn(2+) binding. The active site involves glutamate 165. Zn(2+) is bound at residue glutamate 190.

Belongs to the peptidase M16 family. PreP subfamily. Monomer and homodimer; homodimerization is induced by binding of the substrate. It depends on Zn(2+) as a cofactor.

It is found in the mitochondrion intermembrane space. It localises to the mitochondrion matrix. Its function is as follows. Degrades mitochondrial transit peptides after their cleavage in the intermembrane space or in the matrix, and presequence peptides; clearance of these peptides is required to keep the presequence processing machinery running. Preferentially cleaves the N-terminal side of paired basic amino acid residues. Also degrades other unstructured peptides. May function as an ATP-dependent peptidase as opposed to a metalloendopeptidase. In Yarrowia lipolytica (strain CLIB 122 / E 150) (Yeast), this protein is Presequence protease, mitochondrial (CYM1).